Consider the following 348-residue polypeptide: Photosystem II protein D1 (348 aa).

3 helical membrane passes run 33-50 (YIGWFGILMFPLISLATV), 122-137 (HFIFGAGAWMGREWEF), and 146-160 (WIFVAFSAPLVASCA). Chlorophyll a is bound at residue H122. W130 lines the pheophytin a pocket. Residues D174 and E193 each coordinate [CaMn4O5] cluster. The helical transmembrane segment at 201 to 222 (FHILGVAGVFGGSLFSAMHGSL) threads the bilayer. Residue H202 coordinates chlorophyll a. Residues H219 and 268–269 (SF) each bind a quinone. H219 lines the Fe cation pocket. H276 serves as a coordination point for Fe cation. A helical membrane pass occupies residues 278-292 (FLAAWPVIGIWFTAL). [CaMn4O5] cluster contacts are provided by H336, E337, D346, and A348.

Belongs to the reaction center PufL/M/PsbA/D family. In terms of assembly, PSII is composed of 1 copy each of membrane proteins PsbA, PsbB, PsbC, PsbD, PsbE, PsbF, PsbH, PsbI, PsbJ, PsbK, PsbL, PsbM, PsbT, PsbX, PsbY, PsbZ, Psb30/Ycf12, at least 3 peripheral proteins of the oxygen-evolving complex and a large number of cofactors. It forms dimeric complexes. The D1/D2 heterodimer binds P680, chlorophylls that are the primary electron donor of PSII, and subsequent electron acceptors. It shares a non-heme iron and each subunit binds pheophytin, quinone, additional chlorophylls, carotenoids and lipids. D1 provides most of the ligands for the Mn4-Ca-O5 cluster of the oxygen-evolving complex (OEC). There is also a Cl(-1) ion associated with D1 and D2, which is required for oxygen evolution. The PSII complex binds additional chlorophylls, carotenoids and specific lipids. is required as a cofactor. Post-translationally, tyr-165 forms a radical intermediate that is referred to as redox-active TyrZ, YZ or Y-Z.

Its subcellular location is the plastid. The protein localises to the chloroplast thylakoid membrane. It carries out the reaction 2 a plastoquinone + 4 hnu + 2 H2O = 2 a plastoquinol + O2. Functionally, photosystem II (PSII) is a light-driven water:plastoquinone oxidoreductase that uses light energy to abstract electrons from H(2)O, generating O(2) and a proton gradient subsequently used for ATP formation. It consists of a core antenna complex that captures photons, and an electron transfer chain that converts photonic excitation into a charge separation. The D1/D2 (PsbA/PsbD) reaction center heterodimer binds P680, the primary electron donor of PSII as well as several subsequent electron acceptors. The polypeptide is Photosystem II protein D1 (Heterocapsa rotundata (Dinoflagellate)).